The chain runs to 239 residues: MNKNIIIKSIGALTILTSITGVGTTMVEGIQQTAKAENTVKQITNTNVAPYSGVTWMGAGTGFVVGNHTIITNKHVTYHMKVGDEIKAHPNGFYNNGGGLYKVTKIVDYPGKEDIAVVQVEEKSTQPKGRKFKDFTSKFNIASEAKENEPISVIGYPNPNGNKLQMYESTGKVLSVNGNIVSSDAIIQPGSSGSPILNSKHEAIGVIYAGNKPSGESTRGFAVYFSPEIKKFIADNLDK.

The N-terminal stretch at 1–36 is a signal peptide; the sequence is MNKNIIIKSIGALTILTSITGVGTTMVEGIQQTAKA. Residues H75, D114, and S192 each act as charge relay system in the active site.

Belongs to the peptidase S1B family.

The protein localises to the secreted. The protein is Serine protease SplF (splF) of Staphylococcus aureus (strain USA300).